We begin with the raw amino-acid sequence, 157 residues long: NAD(P)H-quinone oxidoreductase subunit N (157 aa).

This sequence belongs to the complex I NdhN subunit family. As to quaternary structure, NDH-1 can be composed of about 15 different subunits; different subcomplexes with different compositions have been identified which probably have different functions.

It localises to the cellular thylakoid membrane. The catalysed reaction is a plastoquinone + NADH + (n+1) H(+)(in) = a plastoquinol + NAD(+) + n H(+)(out). It catalyses the reaction a plastoquinone + NADPH + (n+1) H(+)(in) = a plastoquinol + NADP(+) + n H(+)(out). NDH-1 shuttles electrons from an unknown electron donor, via FMN and iron-sulfur (Fe-S) centers, to quinones in the respiratory and/or the photosynthetic chain. The immediate electron acceptor for the enzyme in this species is believed to be plastoquinone. Couples the redox reaction to proton translocation, and thus conserves the redox energy in a proton gradient. Cyanobacterial NDH-1 also plays a role in inorganic carbon-concentration. The sequence is that of NAD(P)H-quinone oxidoreductase subunit N from Picosynechococcus sp. (strain ATCC 27264 / PCC 7002 / PR-6) (Agmenellum quadruplicatum).